Consider the following 216-residue polypeptide: Uracil-DNA glycosylase (216 aa).

The active-site Proton acceptor is aspartate 59.

It belongs to the uracil-DNA glycosylase (UDG) superfamily. UNG family.

The protein resides in the cytoplasm. The enzyme catalyses Hydrolyzes single-stranded DNA or mismatched double-stranded DNA and polynucleotides, releasing free uracil.. Its function is as follows. Excises uracil residues from the DNA which can arise as a result of misincorporation of dUMP residues by DNA polymerase or due to deamination of cytosine. The chain is Uracil-DNA glycosylase from Staphylococcus epidermidis (strain ATCC 35984 / DSM 28319 / BCRC 17069 / CCUG 31568 / BM 3577 / RP62A).